The sequence spans 140 residues: Cytochrome b (140 aa).

The chain crosses the membrane as a helical span at residues 38–58 (FFALHFLLPFVLAALVIMHLI). Heme b is bound by residues histidine 42 and histidine 56. Histidine 61 contacts a ubiquinone. A helical membrane pass occupies residues 85-105 (FVFKDLVTIFIFFIVLSIFVF).

It belongs to the cytochrome b family. Fungal cytochrome b-c1 complex contains 10 subunits; 3 respiratory subunits, 2 core proteins and 5 low-molecular weight proteins. Cytochrome b-c1 complex is a homodimer. Requires heme b as cofactor.

It is found in the mitochondrion inner membrane. Functionally, component of the ubiquinol-cytochrome c reductase complex (complex III or cytochrome b-c1 complex) that is part of the mitochondrial respiratory chain. The b-c1 complex mediates electron transfer from ubiquinol to cytochrome c. Contributes to the generation of a proton gradient across the mitochondrial membrane that is then used for ATP synthesis. The polypeptide is Cytochrome b (cob) (Aspergillus terreus).